A 1493-amino-acid polypeptide reads, in one-letter code: Inactive serine/threonine-protein kinase TEX14 (1493 aa).

3 ANK repeats span residues 27–54 (LHEY…AVNS), 55–84 (LGQT…DPNH), and 88–117 (DGST…DLRL). In terms of domain architecture, Protein kinase spans 198–511 (VISAQNIYSF…IMKNDLKDFI (314 aa)). ATP contacts are provided by residues 204-212 (IYSFGFGKF) and K266. S430 is subject to Phosphoserine; by PLK1. Residues 559 to 573 (GSQFHSPRGHSSPTG) show a composition bias toward polar residues. The interval 559–615 (GSQFHSPRGHSSPTGKATPEPPVPDVSPVAQQTHRQDAASPACSVAEEARNPSPDQT) is disordered. Phosphoserine occurs at positions 560 and 660. Disordered stretches follow at residues 782–904 (HDSP…RISM) and 940–1081 (AATG…LTPD). The GPPX3Y motif lies at 789–795 (GPPASSY). The short motif at 846–854 (KASLERDRN) is the D-box element. Polar residues-rich tracts occupy residues 855–904 (QNTS…RISM) and 1001–1020 (CGQT…QRFT). Basic and acidic residues predominate over residues 1026-1037 (PPREDEQPEHSE). Residues 1053–1064 (YSGQSAQSTCSP) are compositionally biased toward polar residues. The segment covering 1066 to 1075 (SSEDTEDMTD) has biased composition (acidic residues). Phosphoserine is present on S1100. Residues 1115-1167 (RPQASGEEKFQMRKNLGKNSEILTKSQFQPIRSPEGEQDETLKEPPKEVKEKD) form a disordered region. Residues 1131 to 1144 (GKNSEILTKSQFQP) are compositionally biased toward polar residues. A compositionally biased stretch (basic and acidic residues) spans 1154 to 1167 (ETLKEPPKEVKEKD). The residue at position 1262 (S1262) is a Phosphoserine. Disordered regions lie at residues 1288–1307 (GAGS…ATQR) and 1341–1466 (KGQQ…EEEE). Over residues 1343-1362 (QQVSSTALDENTASRPGSTE) the composition is skewed to polar residues. Residues 1363 to 1380 (NDQRHLEEQETHSNKEDS) show a composition bias toward basic and acidic residues. S1400 carries the post-translational modification Phosphoserine. Positions 1426–1456 (PAREASSKDQEVGEKKRKGEESTKPEKRKPE) are enriched in basic and acidic residues. A Phosphoserine modification is found at S1492.

This sequence belongs to the protein kinase superfamily. As to quaternary structure, interacts with KIF23 and RBM44. Interacts with CEP55; inhibiting interaction between CEP55 and PDCD6IP/ALIX and TSG101. Phosphorylated on Thr residues by CDK1 during early phases of mitosis, promoting the interaction with PLK1 and recruitment to kinetochores. Phosphorylated on Ser-430 by PLK1 during late prometaphase promotes the rapid depletion from kinetochores and its subsequent degradation by the APC/C complex.

The protein localises to the cytoplasm. Its subcellular location is the midbody. It is found in the chromosome. It localises to the centromere. The protein resides in the kinetochore. Functionally, required both for the formation of intercellular bridges during meiosis and for kinetochore-microtubule attachment during mitosis. Intercellular bridges are evolutionarily conserved structures that connect differentiating germ cells and are required for spermatogenesis and male fertility. Acts by promoting the conversion of midbodies into intercellular bridges via its interaction with CEP55: interaction with CEP55 inhibits the interaction between CEP55 and PDCD6IP/ALIX and TSG101, blocking cell abscission and leading to transform midbodies into intercellular bridges. Also plays a role during mitosis: recruited to kinetochores by PLK1 during early mitosis and regulates the maturation of the outer kinetochores and microtubule attachment. Has no protein kinase activity in vitro. The chain is Inactive serine/threonine-protein kinase TEX14 (TEX14) from Bos taurus (Bovine).